The sequence spans 472 residues: Carboxypeptidase Q (472 aa).

Residues 1–20 form the signal peptide; it reads MKFLIFAFFGGVHLLSLCSG. A propeptide spanning residues 21–44 is cleaved from the precursor; the sequence is KAIYKNGISKRTFEEIKEEIASYG. N-linked (GlcNAc...) asparagine glycans are attached at residues N61 and N179. Zn(2+) contacts are provided by H290 and D302. E336 serves as the catalytic Nucleophile. E337 serves as a coordination point for Zn(2+). N353 and N356 each carry an N-linked (GlcNAc...) asparagine glycan. D364 contacts Zn(2+). N-linked (GlcNAc...) asparagine glycosylation is present at N396. H434 serves as a coordination point for Zn(2+).

The protein belongs to the peptidase M28 family. Homodimer. The monomeric form is inactive while the homodimer is active. N-glycosylated. The secreted form is modified by hybrid or complex type oligosaccharide chains.

It is found in the endoplasmic reticulum. Its subcellular location is the golgi apparatus. The protein localises to the lysosome. The protein resides in the secreted. Its function is as follows. Carboxypeptidase that may play an important role in the hydrolysis of circulating peptides. Catalyzes the hydrolysis of dipeptides with unsubstituted terminals into amino acids. May play a role in the liberation of thyroxine hormone from its thyroglobulin (Tg) precursor. This is Carboxypeptidase Q (CPQ) from Pongo abelii (Sumatran orangutan).